A 486-amino-acid polypeptide reads, in one-letter code: UDP-N-acetylmuramoyl-L-alanyl-D-glutamate--2,6-diaminopimelate ligase (486 aa).

Ser-30 contacts UDP-N-acetyl-alpha-D-muramoyl-L-alanyl-D-glutamate. Residue 111 to 117 participates in ATP binding; the sequence is GTNGKTT. UDP-N-acetyl-alpha-D-muramoyl-L-alanyl-D-glutamate contacts are provided by residues 153-154, Ser-180, Gln-186, and Arg-188; that span reads TT. N6-carboxylysine is present on Lys-220. Residues Arg-378, 402 to 405, Gly-455, and Glu-459 contribute to the meso-2,6-diaminopimelate site; that span reads DNPR. Positions 402–405 match the Meso-diaminopimelate recognition motif motif; the sequence is DNPR.

It belongs to the MurCDEF family. MurE subfamily. Mg(2+) is required as a cofactor. In terms of processing, carboxylation is probably crucial for Mg(2+) binding and, consequently, for the gamma-phosphate positioning of ATP.

It localises to the cytoplasm. The catalysed reaction is UDP-N-acetyl-alpha-D-muramoyl-L-alanyl-D-glutamate + meso-2,6-diaminopimelate + ATP = UDP-N-acetyl-alpha-D-muramoyl-L-alanyl-gamma-D-glutamyl-meso-2,6-diaminopimelate + ADP + phosphate + H(+). The protein operates within cell wall biogenesis; peptidoglycan biosynthesis. In terms of biological role, catalyzes the addition of meso-diaminopimelic acid to the nucleotide precursor UDP-N-acetylmuramoyl-L-alanyl-D-glutamate (UMAG) in the biosynthesis of bacterial cell-wall peptidoglycan. In Parabacteroides distasonis (strain ATCC 8503 / DSM 20701 / CIP 104284 / JCM 5825 / NCTC 11152), this protein is UDP-N-acetylmuramoyl-L-alanyl-D-glutamate--2,6-diaminopimelate ligase.